The primary structure comprises 146 residues: Hemoglobin subunit beta (146 aa).

One can recognise a Globin domain in the interval 2–146 (HWSAEEKQLI…VAHALARKYH (145 aa)). Heme b-binding residues include His63 and His92.

Belongs to the globin family. Heterotetramer of two alpha chains and two beta chains. In terms of tissue distribution, red blood cells.

Functionally, involved in oxygen transport from the lung to the various peripheral tissues. The chain is Hemoglobin subunit beta (HBB) from Stercorarius maccormicki (South polar skua).